We begin with the raw amino-acid sequence, 393 residues long: tRNA (guanine-N(7)-)-methyltransferase (393 aa).

S-adenosyl-L-methionine contacts are provided by Glu-124, Glu-149, and Asp-176. Asp-232 contacts substrate.

It belongs to the class I-like SAM-binding methyltransferase superfamily. TrmB family.

It catalyses the reaction guanosine(46) in tRNA + S-adenosyl-L-methionine = N(7)-methylguanosine(46) in tRNA + S-adenosyl-L-homocysteine. It participates in tRNA modification; N(7)-methylguanine-tRNA biosynthesis. Functionally, catalyzes the formation of N(7)-methylguanine at position 46 (m7G46) in tRNA. In Helicobacter pylori (strain ATCC 700392 / 26695) (Campylobacter pylori), this protein is tRNA (guanine-N(7)-)-methyltransferase.